Here is a 66-residue protein sequence, read N- to C-terminus: Beta-toxin Chui3 (66 aa).

One can recognise an LCN-type CS-alpha/beta domain in the interval 1–66 (KEGYLVELGT…VWPLKNKTCR (66 aa)). Intrachain disulfides connect Cys12-Cys65, Cys16-Cys41, Cys25-Cys46, and Cys29-Cys48.

This sequence belongs to the long (4 C-C) scorpion toxin superfamily. Sodium channel inhibitor family. Beta subfamily. Expressed by the venom gland.

It localises to the secreted. In terms of biological role, beta toxins bind voltage-independently at site-4 of sodium channels (Nav) and shift the voltage of activation toward more negative potentials thereby affecting sodium channel activation and promoting spontaneous and repetitive firing. Acts on human sodium channel Nav1.6/SCN8A. This is Beta-toxin Chui3 from Centruroides huichol (Scorpion).